The primary structure comprises 418 residues: Tyrosine--tRNA ligase (418 aa).

Residue tyrosine 38 participates in L-tyrosine binding. A 'HIGH' region motif is present at residues 43–52 (CTARSLHIGS). Residues tyrosine 175 and glutamine 179 each coordinate L-tyrosine. The short motif at 235-239 (KMGKT) is the 'KMSKS' region element. An ATP-binding site is contributed by lysine 238. Residues 348 to 413 (LSVVKLLQVS…CGKKRHLKVV (66 aa)) enclose the S4 RNA-binding domain.

The protein belongs to the class-I aminoacyl-tRNA synthetase family. TyrS type 1 subfamily. In terms of assembly, homodimer.

The protein localises to the cytoplasm. It catalyses the reaction tRNA(Tyr) + L-tyrosine + ATP = L-tyrosyl-tRNA(Tyr) + AMP + diphosphate + H(+). Catalyzes the attachment of tyrosine to tRNA(Tyr) in a two-step reaction: tyrosine is first activated by ATP to form Tyr-AMP and then transferred to the acceptor end of tRNA(Tyr). The chain is Tyrosine--tRNA ligase from Ehrlichia ruminantium (strain Gardel).